The sequence spans 188 residues: Elongation factor P (188 aa).

The residue at position 34 (Lys-34) is an N6-(3,6-diaminohexanoyl)-5-hydroxylysine.

This sequence belongs to the elongation factor P family. In terms of processing, may be beta-lysylated on the epsilon-amino group of Lys-34 by the combined action of EpmA and EpmB, and then hydroxylated on the C5 position of the same residue by EpmC (if this protein is present). Lysylation is critical for the stimulatory effect of EF-P on peptide-bond formation. The lysylation moiety may extend toward the peptidyltransferase center and stabilize the terminal 3-CCA end of the tRNA. Hydroxylation of the C5 position on Lys-34 may allow additional potential stabilizing hydrogen-bond interactions with the P-tRNA.

Its subcellular location is the cytoplasm. The protein operates within protein biosynthesis; polypeptide chain elongation. Involved in peptide bond synthesis. Alleviates ribosome stalling that occurs when 3 or more consecutive Pro residues or the sequence PPG is present in a protein, possibly by augmenting the peptidyl transferase activity of the ribosome. Modification of Lys-34 is required for alleviation. The polypeptide is Elongation factor P (Klebsiella pneumoniae (strain 342)).